The following is a 680-amino-acid chain: Probable inactive DNA (cytosine-5)-methyltransferase DRM3 (680 aa).

Residues 1-24 are disordered; it reads MVKVEDDVEGSGINASVGDLRDAA. In terms of domain architecture, UBA 1 spans 45–86; it reads SSSSHVRSQFIGMGFSPMLVDRVLQKHGDRDSDTILEALLSQ. The disordered stretch occupies residues 91-113; it reads KSGSESGSLGDLFDSDNEENSSH. In terms of domain architecture, UBA 2 spans 194–235; the sequence is SLFGVMDKTLHLLQMGFTEEEVSSVIDKAGPEATVLELADTI. Residues 336–663 form the SAM-dependent MTase DRM-type domain; it reads IRRNVRSDVA…QRVKHIMGRL (328 aa).

The protein belongs to the class I-like SAM-binding methyltransferase superfamily. DRM-methyltransferase family.

The protein localises to the nucleus. Involved in de novo DNA methylation. Involved in RNA-directed DNA methylation (RdDM). The chain is Probable inactive DNA (cytosine-5)-methyltransferase DRM3 from Oryza sativa subsp. japonica (Rice).